The following is a 763-amino-acid chain: Probable ubiquitin carboxyl-terminal hydrolase MINDY-4 (763 aa).

Ser143 is modified (phosphoserine). A disordered region spans residues 154–368; the sequence is SSKRSSHKSR…SQPASLRKNQ (215 aa). Basic and acidic residues predominate over residues 180–202; it reads EKTDKLPMSEPSLDTKRMGEKVR. Phosphoserine is present on residues Ser220 and Ser224. Polar residues predominate over residues 252–261; it reads ELSTHTSTCP. Low complexity predominate over residues 267-278; that stretch reads PASSTASTSRSP. At Ser296 the chain carries Phosphoserine. Over residues 346–355 the composition is skewed to basic and acidic residues; sequence TQERPERAFE. Residues 357–368 are compositionally biased toward polar residues; the sequence is QGSQPASLRKNQ. The Nucleophile role is filled by Cys463. His683 functions as the Proton acceptor in the catalytic mechanism.

This sequence belongs to the MINDY deubiquitinase family. FAM188 subfamily.

The catalysed reaction is Thiol-dependent hydrolysis of ester, thioester, amide, peptide and isopeptide bonds formed by the C-terminal Gly of ubiquitin (a 76-residue protein attached to proteins as an intracellular targeting signal).. Probable hydrolase that can remove 'Lys-48'-linked conjugated ubiquitin from proteins. This is Probable ubiquitin carboxyl-terminal hydrolase MINDY-4 (MINDY4) from Bos taurus (Bovine).